The following is a 300-amino-acid chain: NAD kinase (300 aa).

The active-site Proton acceptor is the Asp75. Residues 75–76 (DG), 149–150 (ND), Arg177, Asp179, 190–195 (TAYALS), Ala214, and Gln248 each bind NAD(+).

This sequence belongs to the NAD kinase family. A divalent metal cation serves as cofactor.

It is found in the cytoplasm. The catalysed reaction is NAD(+) + ATP = ADP + NADP(+) + H(+). Involved in the regulation of the intracellular balance of NAD and NADP, and is a key enzyme in the biosynthesis of NADP. Catalyzes specifically the phosphorylation on 2'-hydroxyl of the adenosine moiety of NAD to yield NADP. This chain is NAD kinase, found in Burkholderia pseudomallei (strain K96243).